Consider the following 470-residue polypeptide: Maltose fermentation regulatory protein YPR196W (470 aa).

A DNA-binding region (zn(2)-C6 fungal-type) is located at residues 8–34 (CDCCRVRRVKCDRNRPCDRCRQRNLRC). Residues 41–49 (RKRGPKSIG) carry the Nuclear localization signal motif.

The protein belongs to the MAL13 family.

It localises to the nucleus. In terms of biological role, may regulate the transcription of maltase and maltose permease genes. The chain is Maltose fermentation regulatory protein YPR196W from Saccharomyces cerevisiae (strain ATCC 204508 / S288c) (Baker's yeast).